Reading from the N-terminus, the 612-residue chain is Elongation factor 4 (612 aa).

Residues 11-193 (NHIRNFSIVA…KIVTDIPAPS (183 aa)) enclose the tr-type G domain. GTP is bound by residues 23–28 (DHGKST) and 140–143 (NKID).

It belongs to the TRAFAC class translation factor GTPase superfamily. Classic translation factor GTPase family. LepA subfamily.

It is found in the cell membrane. It catalyses the reaction GTP + H2O = GDP + phosphate + H(+). Functionally, required for accurate and efficient protein synthesis under certain stress conditions. May act as a fidelity factor of the translation reaction, by catalyzing a one-codon backward translocation of tRNAs on improperly translocated ribosomes. Back-translocation proceeds from a post-translocation (POST) complex to a pre-translocation (PRE) complex, thus giving elongation factor G a second chance to translocate the tRNAs correctly. Binds to ribosomes in a GTP-dependent manner. This chain is Elongation factor 4, found in Lactobacillus acidophilus (strain ATCC 700396 / NCK56 / N2 / NCFM).